We begin with the raw amino-acid sequence, 78 residues long: RNA-binding protein KhpA (78 aa).

In terms of domain architecture, KH spans 29 to 78 (TIIYELTVAKGDIGKIIGKEGRTIKAIRTLLVSVASRDNVKVSLEIMEER).

It belongs to the KhpA RNA-binding protein family.

The protein resides in the cytoplasm. Functionally, a probable RNA-binding protein. This Chlamydia trachomatis serovar D (strain ATCC VR-885 / DSM 19411 / UW-3/Cx) protein is RNA-binding protein KhpA.